The following is a 174-amino-acid chain: Keratin-associated protein 9-2 (174 aa).

17 repeat units span residues Cys-8–Thr-12, Cys-13–Thr-17, Cys-18–Thr-22, Cys-37–Ala-41, Cys-42–Ser-46, Cys-51–Thr-55, Cys-61–Thr-65, Cys-66–Thr-70, Cys-75–Ser-79, Cys-80–Pro-84, Cys-85–Thr-89, Cys-90–Ser-94, Cys-95–Thr-99, Cys-144–Ala-148, Cys-149–Thr-153, Cys-154–Thr-158, and Cys-168–Ser-172. The segment at Cys-8–Ser-172 is 17 X 5 AA repeats of C-C-[RQVSGE]-[SPTQ]-[TASP].

Belongs to the KRTAP type 9 family. Interacts with hair keratins.

Its function is as follows. In the hair cortex, hair keratin intermediate filaments are embedded in an interfilamentous matrix, consisting of hair keratin-associated proteins (KRTAP), which are essential for the formation of a rigid and resistant hair shaft through their extensive disulfide bond cross-linking with abundant cysteine residues of hair keratins. The matrix proteins include the high-sulfur and high-glycine-tyrosine keratins. The polypeptide is Keratin-associated protein 9-2 (KRTAP9-2) (Homo sapiens (Human)).